The primary structure comprises 237 residues: Ribosomal RNA small subunit methyltransferase G (237 aa).

S-adenosyl-L-methionine is bound by residues glycine 78, phenylalanine 83, 129–130 (AE), and arginine 148.

This sequence belongs to the methyltransferase superfamily. RNA methyltransferase RsmG family.

It is found in the cytoplasm. Specifically methylates the N7 position of a guanine in 16S rRNA. The sequence is that of Ribosomal RNA small subunit methyltransferase G from Clostridium kluyveri (strain ATCC 8527 / DSM 555 / NBRC 12016 / NCIMB 10680 / K1).